The primary structure comprises 489 residues: 5'-AMP-activated protein kinase subunit gamma-3 (489 aa).

Positions 1-113 (MEPGLEHALR…PAGVGTPPTG (113 aa)) are disordered. The span at 34-46 (SSSWPSPAVTSSS) shows a compositional bias: low complexity. Basic residues predominate over residues 50–62 (RGKRRAKALRWTR). 3 consecutive CBS domains span residues 197–258 (MATS…RSPL), 280–340 (CFKP…LLPR), and 355–415 (TFRD…HLDM). ADP is bound by residues Arg225, 240 to 245 (MLTITD), Val285, 306 to 307 (HR), and Lys325. AMP-binding positions include Arg225, 240–245 (MLTITD), Val285, His306, 306–307 (HR), Lys325, Thr355, Ala360, 381–382 (SA), 397–400 (SRFD), Arg424, Leu432, His453, 453–454 (HR), and 469–472 (SLSD). ATP is bound by residues Arg225, 240 to 245 (MLTITD), Val285, 306 to 307 (HR), Arg307, and Lys325. The AMPK pseudosubstrate signature appears at 293–314 (LFEAVYTLIKNRIHRLPVLDPV). Residues 397–400 (SRFD), Arg424, Leu432, and 453–454 (HR) each bind ADP. Residues 397–400 (SRFD), Arg424, Leu432, and 453–454 (HR) each bind ATP. Residues 427-486 (CLEGVLSCQPHESLGEVIDRIAREQVHRLVLVDETQHLLGVVSLSDILQALVLSPAGIDA) enclose the CBS 4 domain.

It belongs to the 5'-AMP-activated protein kinase gamma subunit family. As to quaternary structure, AMPK is a heterotrimer of an alpha catalytic subunit (PRKAA1 or PRKAA2), a beta (PRKAB1 or PRKAB2) and a gamma non-catalytic subunits (PRKAG1, PRKAG2 or PRKAG3). Interacts with FNIP1 and FNIP2. Phosphorylated by ULK1; leading to negatively regulate AMPK activity and suggesting the existence of a regulatory feedback loop between ULK1 and AMPK. Post-translationally, glycosylated; O-GlcNAcylated by OGT, promoting the AMP-activated protein kinase (AMPK) activity. As to expression, skeletal muscle, with weak expression in heart and pancreas.

Its function is as follows. AMP/ATP-binding subunit of AMP-activated protein kinase (AMPK), an energy sensor protein kinase that plays a key role in regulating cellular energy metabolism. In response to reduction of intracellular ATP levels, AMPK activates energy-producing pathways and inhibits energy-consuming processes: inhibits protein, carbohydrate and lipid biosynthesis, as well as cell growth and proliferation. AMPK acts via direct phosphorylation of metabolic enzymes, and by longer-term effects via phosphorylation of transcription regulators. AMPK also acts as a regulator of cellular polarity by remodeling the actin cytoskeleton; probably by indirectly activating myosin. The AMPK gamma3 subunit is a non-catalytic subunit with a regulatory role in muscle energy metabolism. It mediates binding to AMP, ADP and ATP, leading to AMPK activation or inhibition: AMP-binding results in allosteric activation of alpha catalytic subunit (PRKAA1 or PRKAA2) both by inducing phosphorylation and preventing dephosphorylation of catalytic subunits. ADP also stimulates phosphorylation, without stimulating already phosphorylated catalytic subunit. ATP promotes dephosphorylation of catalytic subunit, rendering the AMPK enzyme inactive. In Homo sapiens (Human), this protein is 5'-AMP-activated protein kinase subunit gamma-3 (PRKAG3).